Reading from the N-terminus, the 475-residue chain is Sulfate adenylyltransferase subunit 1 (475 aa).

Residues 25–239 form the tr-type G domain; that stretch reads KSLLRFLTCG…EVLETVEIQR (215 aa). The G1 stretch occupies residues 34 to 41; it reads GSVDDGKS. A GTP-binding site is contributed by 34 to 41; sequence GSVDDGKS. A G2 region spans residues 92-96; sequence GITID. The tract at residues 113–116 is G3; the sequence is DTPG. Residues 113–117 and 168–171 contribute to the GTP site; these read DTPGH and NKMD. The tract at residues 168–171 is G4; sequence NKMD. The tract at residues 206-208 is G5; sequence SAL.

It belongs to the TRAFAC class translation factor GTPase superfamily. Classic translation factor GTPase family. CysN/NodQ subfamily. In terms of assembly, heterodimer composed of CysD, the smaller subunit, and CysN.

It catalyses the reaction sulfate + ATP + H(+) = adenosine 5'-phosphosulfate + diphosphate. Its pathway is sulfur metabolism; hydrogen sulfide biosynthesis; sulfite from sulfate: step 1/3. With CysD forms the ATP sulfurylase (ATPS) that catalyzes the adenylation of sulfate producing adenosine 5'-phosphosulfate (APS) and diphosphate, the first enzymatic step in sulfur assimilation pathway. APS synthesis involves the formation of a high-energy phosphoric-sulfuric acid anhydride bond driven by GTP hydrolysis by CysN coupled to ATP hydrolysis by CysD. The chain is Sulfate adenylyltransferase subunit 1 from Escherichia coli O9:H4 (strain HS).